Here is a 172-residue protein sequence, read N- to C-terminus: Signal peptidase complex catalytic subunit SEC11 (172 aa).

Topologically, residues 1–14 are cytoplasmic; the sequence is MLSSLQNPRQAAAQ. Residues 15 to 35 traverse the membrane as a helical; Signal-anchor for type II membrane protein segment; the sequence is LMNFAMILSTAFMMWKGLSVA. The Lumenal segment spans residues 36–172; that stretch reads TDSPSPIVVV…MGLLVVIQRE (137 aa). Residues S49, H90, and D115 each act as charge relay system in the active site. Residues 158–169 form a C-terminal short (CTS) helix region; that stretch reads VMLGIMGLLVVI.

The protein belongs to the peptidase S26B family. Component of the signal peptidase complex (SPC) composed of a catalytic subunit SEC11 and three accessory subunits SPC1, SPC2 and SPC3. The complex induces a local thinning of the ER membrane which is used to measure the length of the signal peptide (SP) h-region of protein substrates. This ensures the selectivity of the complex towards h-regions shorter than 18-20 amino acids. SPC associates with the translocon complex.

It is found in the endoplasmic reticulum membrane. It carries out the reaction Cleavage of hydrophobic, N-terminal signal or leader sequences from secreted and periplasmic proteins.. Functionally, catalytic component of the signal peptidase complex (SPC) which catalyzes the cleavage of N-terminal signal sequences from nascent proteins as they are translocated into the lumen of the endoplasmic reticulum. Specifically cleaves N-terminal signal peptides that contain a hydrophobic alpha-helix (h-region) shorter than 18-20 amino acids. The chain is Signal peptidase complex catalytic subunit SEC11 (SEC11) from Metarhizium robertsii (strain ARSEF 23 / ATCC MYA-3075) (Metarhizium anisopliae (strain ARSEF 23)).